The chain runs to 1250 residues: DNA topoisomerase 3-alpha (1250 aa).

One can recognise a Toprim domain in the interval 27–171; sequence KYLNVAEKND…NISVYRATFS (145 aa). Residues 189-610 enclose the Topo IA-type catalytic domain; the sequence is DKRQSDAVDV…EQIAKYKQAY (422 aa). Tyr356 functions as the O-(5'-phospho-DNA)-tyrosine intermediate in the catalytic mechanism. Residues 769 to 835 are compositionally biased toward gly residues; it reads RGGGGGPGPG…GTGGGGLGGG (67 aa). 2 disordered regions span residues 769 to 899 and 953 to 1035; these read RGGG…GLDE and NGGT…TVLC. Residues 840–865 are compositionally biased toward basic and acidic residues; sequence PGGESKKSATKKPPNEPKPKKTKEPK. A compositionally biased stretch (low complexity) spans 866–886; that stretch reads AAPNKKTSSKSSGSIRSFFTS. A compositionally biased stretch (polar residues) spans 956–965; that stretch reads TMPTESNGDQ. Basic and acidic residues-rich tracts occupy residues 966–994 and 1012–1021; these read QLDK…RERA and PRWDSVERDS. Low complexity predominate over residues 1022–1033; the sequence is TPPSSVPESETV. 4 residues coordinate Zn(2+): Cys1035, Cys1038, Cys1061, and Cys1067. Residues 1035-1076 form a GRF-type 1 zinc finger; that stretch reads CTGCQQPARQNTVRKNGPNLGRLYYKCPKPDECNFFQWADEP. Residues 1069–1150 form a disordered region; sequence FFQWADEPPS…TATPGDGEEV (82 aa). Residues 1079 to 1101 are compositionally biased toward polar residues; the sequence is SAKSKNSTGSAPQSTTSWGSNRV. Low complexity predominate over residues 1106-1134; sequence SIQQSNSQRGQSSMRSNSSSTVTITQTKT. Residues Cys1152, Cys1154, Cys1177, and Cys1184 each coordinate Zn(2+). The GRF-type 2 zinc finger occupies 1152–1193; it reads CNCGQLASQLTVRKDGPNQGRPFYACPTREKSCGFFKWGDED. Residues 1188 to 1231 are disordered; that stretch reads KWGDEDQNQGASSTSWGSANRNPPGRSQPTAITSDGPKTRRCGL. Positions 1195–1220 are enriched in polar residues; sequence NQGASSTSWGSANRNPPGRSQPTAIT.

This sequence belongs to the type IA topoisomerase family.

It carries out the reaction ATP-independent breakage of single-stranded DNA, followed by passage and rejoining.. Functionally, releases the supercoiling and torsional tension of DNA introduced during the DNA replication and transcription by transiently cleaving and rejoining one strand of the DNA duplex. Introduces a single-strand break via transesterification at a target site in duplex DNA. The scissile phosphodiester is attacked by the catalytic tyrosine of the enzyme, resulting in the formation of a DNA-(5'-phosphotyrosyl)-enzyme intermediate and the expulsion of a 3'-OH DNA strand. The free DNA strand than undergoes passage around the unbroken strand thus removing DNA supercoils. Finally, in the religation step, the DNA 3'-OH attacks the covalent intermediate to expel the active-site tyrosine and restore the DNA phosphodiester backbone. Weakly relaxes negative supercoils and displays a distinct preference for binding single-stranded DNA. In Drosophila melanogaster (Fruit fly), this protein is DNA topoisomerase 3-alpha (Top3alpha).